We begin with the raw amino-acid sequence, 131 residues long: D-ribose pyranase (131 aa).

The Proton donor role is filled by His20. Residues Asp28, His98, and 120–122 (YAN) each bind substrate.

This sequence belongs to the RbsD / FucU family. RbsD subfamily. In terms of assembly, homodecamer.

Its subcellular location is the cytoplasm. The enzyme catalyses beta-D-ribopyranose = beta-D-ribofuranose. Its pathway is carbohydrate metabolism; D-ribose degradation; D-ribose 5-phosphate from beta-D-ribopyranose: step 1/2. Catalyzes the interconversion of beta-pyran and beta-furan forms of D-ribose. This Bacillus thuringiensis (strain Al Hakam) protein is D-ribose pyranase.